The sequence spans 321 residues: Chloroplastic calcium uniporter protein (321 aa).

The transit peptide at methionine 1 to serine 56 directs the protein to the chloroplast. The next 2 helical transmembrane spans lie at leucine 223–tryptophan 243 and valine 249–phenylalanine 269. A Selectivity filter motif is present at residues tryptophan 247–phenylalanine 255. Glutamate 251 contacts Ca(2+).

It belongs to the MCU (TC 1.A.77) family.

The protein resides in the plastid. It localises to the chloroplast membrane. It carries out the reaction Ca(2+)(in) = Ca(2+)(out). In terms of biological role, chloroplastic membrane calcium uniporter that mediates calcium uptake into chloroplast stroma. Constitutes a pore-forming and calcium-conducting subunit. Chloroplastic calcium homeostasis plays key roles in cellular physiology. Promotes calcium uptake into chloroplast stroma in response to osmotic-stress, fine-tuning cytosolic MAPK3/MAPK6 phosphorylation and affecting stomata opening. The chain is Chloroplastic calcium uniporter protein from Arabidopsis thaliana (Mouse-ear cress).